The sequence spans 91 residues: Small ribosomal subunit protein bS16 (91 aa).

Belongs to the bacterial ribosomal protein bS16 family.

In Latilactobacillus sakei subsp. sakei (strain 23K) (Lactobacillus sakei subsp. sakei), this protein is Small ribosomal subunit protein bS16.